The chain runs to 472 residues: MGLLLRSALFKYIIIVLIMLNLRGYVLAEQEQGSQIPLEEIIQVGVTRNKIMTAQYECYQKIMQEPANGKEGHFCNRTWDGWLCWGDVSAGVISEQRCPDYFQDFDPSEKVTKECGKNGHWFRHPDSNRTWTNYTRCNTFTHEKVKTALNLYYLTIIGHGLSIASLLISLGIFFYFKNLSCQRITLHKNLFFSFVCNSIITIISLSAVANNQALVATNPVSCKISQFIHLYLMGCNYFWMLCEGIYLHTLIVVAVFAEKQHLMWYYLLGWGFPLIPACIHAVARSLYYNDNCWISSETHLLYIIHGPICAALLVNLFFLLNIVRVLITKLKVTHQAESNLYMKAVRATLILVPLLGIEFVLFPWKPEGRIAEEIYDYVMHILMHYQGLLVATIFCFFNGEVQAVLKRHWNQYKIQFGSSFAHSEGLRSASYTVSSISEIQGTTYTHDYSEQSNGKNCHDMENVFFKTEKQYM.

An N-terminal signal peptide occupies residues 1–28; that stretch reads MGLLLRSALFKYIIIVLIMLNLRGYVLA. Residues 29-149 lie on the Extracellular side of the membrane; it reads EQEQGSQIPL…FTHEKVKTAL (121 aa). 3 cysteine pairs are disulfide-bonded: cysteine 58-cysteine 84, cysteine 75-cysteine 115, and cysteine 98-cysteine 137. Residues asparagine 76, asparagine 128, and asparagine 133 are each glycosylated (N-linked (GlcNAc...) asparagine). A helical transmembrane segment spans residues 150–174; sequence NLYYLTIIGHGLSIASLLISLGIFF. The Cytoplasmic segment spans residues 175–185; sequence YFKNLSCQRIT. A helical membrane pass occupies residues 186–208; the sequence is LHKNLFFSFVCNSIITIISLSAV. Residues 209 to 219 lie on the Extracellular side of the membrane; the sequence is ANNQALVATNP. Residues 220-248 traverse the membrane as a helical segment; it reads VSCKISQFIHLYLMGCNYFWMLCEGIYLH. Over 249 to 262 the chain is Cytoplasmic; that stretch reads TLIVVAVFAEKQHL. Residues 263–283 traverse the membrane as a helical segment; sequence MWYYLLGWGFPLIPACIHAVA. The Extracellular segment spans residues 284-299; the sequence is RSLYYNDNCWISSETH. The chain crosses the membrane as a helical span at residues 300–324; the sequence is LLYIIHGPICAALLVNLFFLLNIVR. Over 325–339 the chain is Cytoplasmic; that stretch reads VLITKLKVTHQAESN. Residues 340 to 361 traverse the membrane as a helical segment; it reads LYMKAVRATLILVPLLGIEFVL. At 362–376 the chain is on the extracellular side; sequence FPWKPEGRIAEEIYD. Residues 377–397 form a helical membrane-spanning segment; that stretch reads YVMHILMHYQGLLVATIFCFF. Residues 398 to 472 lie on the Cytoplasmic side of the membrane; the sequence is NGEVQAVLKR…VFFKTEKQYM (75 aa).

Belongs to the G-protein coupled receptor 2 family.

It is found in the cell membrane. Functionally, may function as G protein-coupled receptor for calcitonin-gene-related peptides and adrenomedullin. Specificity may be modulated by accessory proteins. May activate cAMP-dependent pathway. The protein is Calcitonin gene-related peptide type 1 receptor (calcrl) of Xenopus tropicalis (Western clawed frog).